The chain runs to 319 residues: Taste receptor type 2 member 30 (319 aa).

Position 1 (Met1) is a topological domain, extracellular. Residues Ile2 to Phe22 form a helical membrane-spanning segment. The Cytoplasmic portion of the chain corresponds to Ala23–Gln46. Residues Ile47–Tyr67 traverse the membrane as a helical segment. Residues Ala68–Asn86 are Extracellular-facing. The chain crosses the membrane as a helical span at residues Val87–Leu107. The Cytoplasmic portion of the chain corresponds to Leu108–Lys126. Residues Ser127–Ile147 form a helical membrane-spanning segment. Residues Asn148–Thr178 lie on the Extracellular side of the membrane. 2 N-linked (GlcNAc...) asparagine glycosylation sites follow: Asn161 and Asn176. A helical transmembrane segment spans residues Leu179–Ile199. At Cys200–Gln229 the chain is on the cytoplasmic side. A helical transmembrane segment spans residues Thr230–Cys250. The Extracellular segment spans residues Asn251–Pro259. Residues Val260–Ile280 traverse the membrane as a helical segment. The Cytoplasmic portion of the chain corresponds to Leu281–Gly319.

Belongs to the G-protein coupled receptor T2R family.

Its subcellular location is the membrane. Functionally, receptor that may play a role in the perception of bitterness and is gustducin-linked. May play a role in sensing the chemical composition of the gastrointestinal content. The activity of this receptor may stimulate alpha gustducin, mediate PLC-beta-2 activation and lead to the gating of TRPM5. This chain is Taste receptor type 2 member 30 (TAS2R30), found in Pan troglodytes (Chimpanzee).